Here is a 120-residue protein sequence, read N- to C-terminus: U15-barytoxin-Tl1c (120 aa).

The first 16 residues, 1–16 (MKLFMVLVASFAFAVA), serve as a signal peptide directing secretion. 4 cysteine pairs are disulfide-bonded: cysteine 55-cysteine 73, cysteine 66-cysteine 79, cysteine 70-cysteine 118, and cysteine 72-cysteine 89.

This sequence belongs to the neurotoxin 03 (Tx2) family. 03 subfamily. As to expression, expressed by the venom gland.

It is found in the secreted. Its function is as follows. Ion channel inhibitor. The protein is U15-barytoxin-Tl1c of Trittame loki (Brush-footed trapdoor spider).